A 123-amino-acid chain; its full sequence is Small ribosomal subunit protein uS12 (123 aa).

D89 carries the post-translational modification 3-methylthioaspartic acid.

Belongs to the universal ribosomal protein uS12 family. In terms of assembly, part of the 30S ribosomal subunit. Contacts proteins S8 and S17. May interact with IF1 in the 30S initiation complex.

In terms of biological role, with S4 and S5 plays an important role in translational accuracy. Interacts with and stabilizes bases of the 16S rRNA that are involved in tRNA selection in the A site and with the mRNA backbone. Located at the interface of the 30S and 50S subunits, it traverses the body of the 30S subunit contacting proteins on the other side and probably holding the rRNA structure together. The combined cluster of proteins S8, S12 and S17 appears to hold together the shoulder and platform of the 30S subunit. The protein is Small ribosomal subunit protein uS12 of Mesorhizobium japonicum (strain LMG 29417 / CECT 9101 / MAFF 303099) (Mesorhizobium loti (strain MAFF 303099)).